The primary structure comprises 190 residues: uncharacterized protein (190 aa).

Over 1–55 the chain is Cytoplasmic; the sequence is MSRLRRFNRKILSLSSDYTHDGESDQEDVSILPLDTEEQEELIQKFETNAHITNK. A helical membrane pass occupies residues 56–76; sequence LYINLLSILYLLYGGLLMILV. The Extracellular segment spans residues 77-80; sequence RKSR. A helical membrane pass occupies residues 81–101; the sequence is GYIKLALLAGANSLICSCITL. At 102–123 the chain is on the cytoplasmic side; that stretch reads RYDIVNDYLLFKKFKLRVSNFS. Residues 124-144 traverse the membrane as a helical segment; sequence INIINIILLVLMAWISFNHVV. At 145-149 the chain is on the extracellular side; the sequence is EDKKT. A helical transmembrane segment spans residues 150–170; it reads VLCLQVPMFLFWVAVLVKRWA. The Cytoplasmic segment spans residues 171-190; that stretch reads RNIEDEIADLRCLKYKYKNA.

Its subcellular location is the membrane. This is an uncharacterized protein from Saccharomyces cerevisiae (strain ATCC 204508 / S288c) (Baker's yeast).